The sequence spans 548 residues: Membrane protein insertase YidC (548 aa).

The chain crosses the membrane as a helical span at residues 6 to 26 (NLLVIALLFVSFMIWQAWEQD). Residues 28–55 (NPQPQAQQTTQTTTTAAGSAADQGVPAS) form a disordered region. The segment covering 30 to 50 (QPQAQQTTQTTTTAAGSAADQ) has biased composition (low complexity). Transmembrane regions (helical) follow at residues 350–370 (FVGNWGFSIIIITFIVRGIMY), 420–440 (LGGCFPLLIQMPIFLALYYML), 458–478 (LSAQDPYYILPILMGVTMFFI), and 499–519 (PVIFTVFFLWFPSGLVLYYIV).

It belongs to the OXA1/ALB3/YidC family. Type 1 subfamily. In terms of assembly, interacts with the Sec translocase complex via SecD. Specifically interacts with transmembrane segments of nascent integral membrane proteins during membrane integration.

Its subcellular location is the cell inner membrane. Its function is as follows. Required for the insertion and/or proper folding and/or complex formation of integral membrane proteins into the membrane. Involved in integration of membrane proteins that insert both dependently and independently of the Sec translocase complex, as well as at least some lipoproteins. Aids folding of multispanning membrane proteins. This Shigella boydii serotype 18 (strain CDC 3083-94 / BS512) protein is Membrane protein insertase YidC.